Consider the following 425-residue polypeptide: Aromatic prenyl transferase ptmE (425 aa).

Residues 83 to 84 (GI) and E92 contribute to the L-tryptophan site. Positions 107, 198, 200, 265, 267, 269, 345, 410, and 414 each coordinate substrate.

Belongs to the tryptophan dimethylallyltransferase family. As to quaternary structure, homodimer.

It participates in secondary metabolite biosynthesis. Its function is as follows. Aromatic prenyl transferase; part of the gene cluster that mediates the biosynthesis of the indole diterpenes penitrems. The geranylgeranyl diphosphate (GGPP) synthase ptmG catalyzes the first step in penitrem biosynthesis via conversion of farnesyl pyrophosphate and isopentyl pyrophosphate into geranylgeranyl pyrophosphate (GGPP). Condensation of indole-3-glycerol phosphate with GGPP by the prenyl transferase ptmC then forms 3-geranylgeranylindole (3-GGI). Epoxidation by the FAD-dependent monooxygenase ptmM leads to a epoxidized-GGI that is substrate of the terpene cyclase ptmB for cyclization to yield paspaline. Paspaline is subsequently converted to 13-desoxypaxilline by the cytochrome P450 monooxygenase ptmP, the latter being then converted to paxilline by the cytochrome P450 monooxygenase ptmQ. Paxilline is converted to beta-paxitriol via C-10 ketoreduction by the short-chain dehydrogenase ptmH which can be monoprenylated at the C-20 by the indole diterpene prenyltransferase ptmD. A two-step elimination (acetylation and elimination) process performed by the O-acetyltransferase ptmV and ptmI leads to the production of the prenylated form of penijanthine. The FAD-linked oxidoreductase ptmO then converts the prenylated form of penijanthine into PC-M5 which is in turn transformed into PC-M4 by the aromatic dimethylallyltransferase ptmE. Five sequential oxidative transformations performed by the cytochrome P450 monooxygenases ptmK, ptmU, ptmL, ptmN and ptmJ yield the various penitrem compounds. PtmK, ptmU and ptmM are involved in the formation of the key bicyclic ring of penitrem C via the formation of the intermediates secopenitrem D and penitrem D. PtmL catalyzes the epoxidation of penitrem D and C to yield penitrem B and F, respectively. PtmJ catalyzes the last benzylic hydroxylation to convert penitrem B to prenitrem E and penitrem F to penitrem A. The protein is Aromatic prenyl transferase ptmE of Penicillium ochrochloron.